We begin with the raw amino-acid sequence, 396 residues long: MRPTHWSSNQCEVDFTAEALTTLSLSNRNHEEDPIQPVLKNSNLFLLNRDIWSLIINYLDAFDILRLMHSSRQFYYWLRKSAVDECCFNNNFLNLQPYQRTVPVASDLEWATEVDLYGNPPILKLQLRDSFVWSMLAKFQGLQTIALDGTGVTISSVTNILLNIPTVKTLSIRWCVGVCSLSLIEFLQNSKSRTFSLENLYVLGVKGLELLKPVLLDGSEDDTLTSNWHSRVILFQNALDALPTTHGNPVECDISRCPLNACKIAGQETELADLFSLQKVPACIYCLREWKKPICRYCIDLRSCLVCDSFVCPSCISLDFDLQIQAFARQHRVISTLGVVYPEREDSCFHKIKAAQWHQISPRSLLFQFQEQNHIHHKKIRRKLLAAGWKWPQSQI.

The F-box domain maps to 40–89 (KNSNLFLLNRDIWSLIINYLDAFDILRLMHSSRQFYYWLRKSAVDECCFN).

As to quaternary structure, part of a SCF (SKP1-cullin-F-box) protein ligase complex. Interacts with skp1.

It is found in the cytoplasm. It functions in the pathway protein modification; protein ubiquitination. The polypeptide is F-box protein pof13 (pof13) (Schizosaccharomyces pombe (strain 972 / ATCC 24843) (Fission yeast)).